A 92-amino-acid chain; its full sequence is Large ribosomal subunit protein eL43 (92 aa).

Cysteine 39, cysteine 42, cysteine 57, and cysteine 60 together coordinate Zn(2+).

This sequence belongs to the eukaryotic ribosomal protein eL43 family. Component of the large ribosomal subunit. Mature ribosomes consist of a small (40S) and a large (60S) subunit. The 40S subunit contains 32 different proteins and 1 molecule of RNA (18S). The 60S subunit contains 45 different proteins and 3 molecules of RNA (25S, 5.8S and 5S). The cofactor is Zn(2+).

It localises to the cytoplasm. In terms of biological role, component of the ribosome, a large ribonucleoprotein complex responsible for the synthesis of proteins in the cell. The small ribosomal subunit (SSU) binds messenger RNAs (mRNAs) and translates the encoded message by selecting cognate aminoacyl-transfer RNA (tRNA) molecules. The large subunit (LSU) contains the ribosomal catalytic site termed the peptidyl transferase center (PTC), which catalyzes the formation of peptide bonds, thereby polymerizing the amino acids delivered by tRNAs into a polypeptide chain. The nascent polypeptides leave the ribosome through a tunnel in the LSU and interact with protein factors that function in enzymatic processing, targeting, and the membrane insertion of nascent chains at the exit of the ribosomal tunnel. In Candida albicans (strain SC5314 / ATCC MYA-2876) (Yeast), this protein is Large ribosomal subunit protein eL43.